The sequence spans 190 residues: Anthranilate synthase component II (190 aa).

The Glutamine amidotransferase type-1 domain occupies 1–190 (MILIIDNYDS…ENFCTGIAKA (190 aa)). 51–53 (GPG) serves as a coordination point for L-glutamine. The Nucleophile; for GATase activity role is filled by cysteine 76. L-glutamine is bound by residues glutamine 80 and 126 to 127 (SL). Residues histidine 167 and glutamate 169 contribute to the active site.

Tetramer of two components I and two components II.

It catalyses the reaction chorismate + L-glutamine = anthranilate + pyruvate + L-glutamate + H(+). Its pathway is amino-acid biosynthesis; L-tryptophan biosynthesis; L-tryptophan from chorismate: step 1/5. This is Anthranilate synthase component II (trpG2) from Haloarcula marismortui (strain ATCC 43049 / DSM 3752 / JCM 8966 / VKM B-1809) (Halobacterium marismortui).